The sequence spans 366 residues: HTH-type transcriptional regulator MSMEG_6044/MSMEI_5883 (366 aa).

Residues 11–66 (ATLASLAAELKVSRTTISNAYNRPDQLSADLRERIFDAAKRLGYPGPDPVARSLRT) enclose the HTH lacI-type domain. Positions 13 to 32 (LASLAAELKVSRTTISNAYN) form a DNA-binding region, H-T-H motif.

Functionally, transcriptional regulator that negatively regulates transcription of the mce4 operon, which is involved in cholesterol transport and utilization. Acts by binding to the promoter region of the mce4 operon. This is HTH-type transcriptional regulator MSMEG_6044/MSMEI_5883 from Mycolicibacterium smegmatis (strain ATCC 700084 / mc(2)155) (Mycobacterium smegmatis).